We begin with the raw amino-acid sequence, 338 residues long: Glycerol-3-phosphate dehydrogenase [NAD(P)+] (338 aa).

NADPH is bound by residues Ser13, Trp14, and Lys108. The sn-glycerol 3-phosphate site is built by Lys108, Gly139, and Ser141. Ala143 lines the NADPH pocket. 5 residues coordinate sn-glycerol 3-phosphate: Lys194, Asp247, Ser257, Arg258, and Asn259. The Proton acceptor role is filled by Lys194. Arg258 contacts NADPH. The NADPH site is built by Val282 and Glu284.

This sequence belongs to the NAD-dependent glycerol-3-phosphate dehydrogenase family.

It is found in the cytoplasm. It carries out the reaction sn-glycerol 3-phosphate + NAD(+) = dihydroxyacetone phosphate + NADH + H(+). The enzyme catalyses sn-glycerol 3-phosphate + NADP(+) = dihydroxyacetone phosphate + NADPH + H(+). Its pathway is membrane lipid metabolism; glycerophospholipid metabolism. Functionally, catalyzes the reduction of the glycolytic intermediate dihydroxyacetone phosphate (DHAP) to sn-glycerol 3-phosphate (G3P), the key precursor for phospholipid synthesis. This chain is Glycerol-3-phosphate dehydrogenase [NAD(P)+], found in Streptococcus uberis (strain ATCC BAA-854 / 0140J).